The chain runs to 48 residues: Cytochrome b559 subunit beta (48 aa).

A helical transmembrane segment spans residues 23 to 39 (WLAVHALAIPSVFFLGA). Histidine 27 lines the heme pocket.

It belongs to the PsbE/PsbF family. Heterodimer of an alpha subunit and a beta subunit. PSII is composed of 1 copy each of membrane proteins PsbA, PsbB, PsbC, PsbD, PsbE, PsbF, PsbH, PsbI, PsbJ, PsbK, PsbL, PsbM, PsbT, PsbX, PsbY, Psb30/Ycf12, peripheral proteins PsbO, CyanoQ (PsbQ), PsbU, PsbV and a large number of cofactors. It forms dimeric complexes. It depends on heme b as a cofactor.

Its subcellular location is the cellular thylakoid membrane. Its function is as follows. This b-type cytochrome is tightly associated with the reaction center of photosystem II (PSII). PSII is a light-driven water:plastoquinone oxidoreductase that uses light energy to abstract electrons from H(2)O, generating O(2) and a proton gradient subsequently used for ATP formation. It consists of a core antenna complex that captures photons, and an electron transfer chain that converts photonic excitation into a charge separation. This Prochlorococcus marinus (strain MIT 9515) protein is Cytochrome b559 subunit beta.